The chain runs to 209 residues: Large ribosomal subunit protein uL3 (209 aa).

A disordered region spans residues Gly118–Asp150.

It belongs to the universal ribosomal protein uL3 family. Part of the 50S ribosomal subunit. Forms a cluster with proteins L14 and L19.

One of the primary rRNA binding proteins, it binds directly near the 3'-end of the 23S rRNA, where it nucleates assembly of the 50S subunit. The protein is Large ribosomal subunit protein uL3 of Bacillus pumilus (strain SAFR-032).